We begin with the raw amino-acid sequence, 218 residues long: tRNA (guanine-N(7)-)-methyltransferase (218 aa).

S-adenosyl-L-methionine-binding residues include Glu-43, Asp-68, Glu-101, and Asn-124. Substrate is bound by residues Lys-128 and Asp-160.

This sequence belongs to the class I-like SAM-binding methyltransferase superfamily. TrmB family.

The catalysed reaction is guanosine(46) in tRNA + S-adenosyl-L-methionine = N(7)-methylguanosine(46) in tRNA + S-adenosyl-L-homocysteine. The protein operates within tRNA modification; N(7)-methylguanine-tRNA biosynthesis. In terms of biological role, catalyzes the formation of N(7)-methylguanine at position 46 (m7G46) in tRNA. The polypeptide is tRNA (guanine-N(7)-)-methyltransferase (Acetivibrio thermocellus (strain ATCC 27405 / DSM 1237 / JCM 9322 / NBRC 103400 / NCIMB 10682 / NRRL B-4536 / VPI 7372) (Clostridium thermocellum)).